Reading from the N-terminus, the 118-residue chain is Mediator of RNA polymerase II transcription subunit 11 (118 aa).

This sequence belongs to the Mediator complex subunit 11 family. In terms of assembly, component of the Mediator complex.

Its subcellular location is the nucleus. Component of the Mediator complex, a coactivator involved in the regulated transcription of nearly all RNA polymerase II-dependent genes. Mediator functions as a bridge to convey information from gene-specific regulatory proteins to the basal RNA polymerase II transcription machinery. Mediator is recruited to promoters by direct interactions with regulatory proteins and serves as a scaffold for the assembly of a functional pre-initiation complex with RNA polymerase II and the general transcription factors. This Xenopus tropicalis (Western clawed frog) protein is Mediator of RNA polymerase II transcription subunit 11 (med11).